Reading from the N-terminus, the 147-residue chain is Mitochondrial import receptor subunit TOM20 homolog (147 aa).

Residues 1–3 (MVA) lie on the Mitochondrial intermembrane side of the membrane. The chain crosses the membrane as a helical span at residues 4–26 (VGKTSAIAAGVCGALLLGYCIYF). At 27 to 147 (DRKRRSDPNF…AQNLSEDDVE (121 aa)) the chain is on the cytoplasmic side.

It belongs to the Tom20 family. Forms part of the preprotein translocase complex of the outer mitochondrial membrane (TOM complex). Interacts with tom22.

The protein resides in the mitochondrion outer membrane. Central component of the receptor complex responsible for the recognition and translocation of cytosolically synthesized mitochondrial preproteins. Together with tom22 functions as the transit peptide receptor at the surface of the mitochondrion outer membrane and facilitates the movement of preproteins into the tom40 translocation pore. This Xenopus laevis (African clawed frog) protein is Mitochondrial import receptor subunit TOM20 homolog (tomm20).